The sequence spans 454 residues: Chromosomal replication initiator protein DnaA (454 aa).

A domain I, interacts with DnaA modulators region spans residues 1 to 80 (MNLSNLWQSC…NPELRISLKE (80 aa)). The domain II stretch occupies residues 80–117 (EGVKPAPKIVESTPNTSLRSESAVDFQAESSASVKFES). The tract at residues 118–335 (HLNTKHLFDN…GALNRVKAMQ (218 aa)) is domain III, AAA+ region. 4 residues coordinate ATP: Gly163, Gly165, Lys166, and Thr167. The tract at residues 336–454 (DFKGGDIDID…WANLIRTLSA (119 aa)) is domain IV, binds dsDNA.

Belongs to the DnaA family. Oligomerizes as a right-handed, spiral filament on DNA at oriC.

The protein localises to the cytoplasm. Its function is as follows. Plays an essential role in the initiation and regulation of chromosomal replication. ATP-DnaA binds to the origin of replication (oriC) to initiate formation of the DNA replication initiation complex once per cell cycle. Binds the DnaA box (a 9 base pair repeat at the origin) and separates the double-stranded (ds)DNA. Forms a right-handed helical filament on oriC DNA; dsDNA binds to the exterior of the filament while single-stranded (ss)DNA is stabiized in the filament's interior. The ATP-DnaA-oriC complex binds and stabilizes one strand of the AT-rich DNA unwinding element (DUE), permitting loading of DNA polymerase. After initiation quickly degrades to an ADP-DnaA complex that is not apt for DNA replication. Binds acidic phospholipids. The sequence is that of Chromosomal replication initiator protein DnaA from Haemophilus influenzae (strain ATCC 51907 / DSM 11121 / KW20 / Rd).